The sequence spans 155 residues: S-ribosylhomocysteine lyase (155 aa).

The Fe cation site is built by histidine 58, histidine 62, and cysteine 125.

It belongs to the LuxS family. In terms of assembly, homodimer. Fe cation is required as a cofactor.

The catalysed reaction is S-(5-deoxy-D-ribos-5-yl)-L-homocysteine = (S)-4,5-dihydroxypentane-2,3-dione + L-homocysteine. Involved in the synthesis of autoinducer 2 (AI-2) which is secreted by bacteria and is used to communicate both the cell density and the metabolic potential of the environment. The regulation of gene expression in response to changes in cell density is called quorum sensing. Catalyzes the transformation of S-ribosylhomocysteine (RHC) to homocysteine (HC) and 4,5-dihydroxy-2,3-pentadione (DPD). In Helicobacter pylori (strain Shi470), this protein is S-ribosylhomocysteine lyase.